We begin with the raw amino-acid sequence, 377 residues long: Chaperone protein DnaJ (377 aa).

The region spanning 5 to 70 (DYYEILGVAK…QKRAAYDQFG (66 aa)) is the J domain. The segment at 130–208 (GTEVKIRVPS…CHGQGRVEEH (79 aa)) adopts a CR-type zinc-finger fold. Zn(2+) is bound by residues cysteine 143, cysteine 146, cysteine 160, cysteine 163, cysteine 182, cysteine 185, cysteine 196, and cysteine 199. CXXCXGXG motif repeat units lie at residues 143–150 (CGECHGSG), 160–167 (CGTCGGVG), 182–189 (CPRCHGTG), and 196–203 (CKACHGQG).

It belongs to the DnaJ family. In terms of assembly, homodimer. It depends on Zn(2+) as a cofactor.

The protein resides in the cytoplasm. Participates actively in the response to hyperosmotic and heat shock by preventing the aggregation of stress-denatured proteins and by disaggregating proteins, also in an autonomous, DnaK-independent fashion. Unfolded proteins bind initially to DnaJ; upon interaction with the DnaJ-bound protein, DnaK hydrolyzes its bound ATP, resulting in the formation of a stable complex. GrpE releases ADP from DnaK; ATP binding to DnaK triggers the release of the substrate protein, thus completing the reaction cycle. Several rounds of ATP-dependent interactions between DnaJ, DnaK and GrpE are required for fully efficient folding. Also involved, together with DnaK and GrpE, in the DNA replication of plasmids through activation of initiation proteins. This chain is Chaperone protein DnaJ, found in Thioalkalivibrio sulfidiphilus (strain HL-EbGR7).